The primary structure comprises 506 residues: Histidine--tRNA ligase, mitochondrial (506 aa).

A mitochondrion-targeting transit peptide spans 1–33 (MHLLGLLPRRAWASLLSQLLRPPWASCTGAVRC). At Ser67 the chain carries Phosphoserine. Residues 131–133 (DLT), Arg158, Gln174, Asp178, Arg327, and 331–332 (YY) contribute to the L-histidine site. Position 444 is an N6-acetyllysine (Lys444).

The protein belongs to the class-II aminoacyl-tRNA synthetase family. As to quaternary structure, homodimer.

The protein localises to the mitochondrion. It carries out the reaction tRNA(His) + L-histidine + ATP = L-histidyl-tRNA(His) + AMP + diphosphate + H(+). Mitochondrial aminoacyl-tRNA synthetase that catalyzes the ATP-dependent ligation of histidine to the 3'-end of its cognate tRNA, via the formation of an aminoacyl-adenylate intermediate (His-AMP). The sequence is that of Histidine--tRNA ligase, mitochondrial (HARS2) from Pongo abelii (Sumatran orangutan).